Here is a 222-residue protein sequence, read N- to C-terminus: Myosin regulatory light chain 2 (222 aa).

A disordered region spans residues 1-65; sequence MADEKKKVKK…RGSRKSKRAG (65 aa). Position 2 is an N-acetylalanine (Ala-2). Low complexity predominate over residues 19-53; it reads TSETASEAASEAATPAPAATPAPAASATGSKRASG. Phosphoserine is present on residues Ser-66 and Ser-67. 3 consecutive EF-hand domains span residues 75–110, 147–180, and 181–216; these read KQIA…VGKI, DEDE…FGDK, and FTMK…KGEE. Ca(2+)-binding residues include Asp-88, Asp-90, Asp-92, and Asp-99.

As to quaternary structure, myosin is a hexamer of 2 heavy chains and 4 light chains.

The protein is Myosin regulatory light chain 2 (Mlc2) of Drosophila melanogaster (Fruit fly).